The sequence spans 680 residues: DNA-directed RNA polymerase subunit beta' (680 aa).

Cysteine 69, cysteine 71, cysteine 87, and cysteine 90 together coordinate Zn(2+). The Mg(2+) site is built by aspartate 489, aspartate 491, and aspartate 493.

Belongs to the RNA polymerase beta' chain family. RpoC1 subfamily. In plastids the minimal PEP RNA polymerase catalytic core is composed of four subunits: alpha, beta, beta', and beta''. When a (nuclear-encoded) sigma factor is associated with the core the holoenzyme is formed, which can initiate transcription. It depends on Mg(2+) as a cofactor. The cofactor is Zn(2+).

Its subcellular location is the plastid. The protein resides in the chloroplast. The catalysed reaction is RNA(n) + a ribonucleoside 5'-triphosphate = RNA(n+1) + diphosphate. Its function is as follows. DNA-dependent RNA polymerase catalyzes the transcription of DNA into RNA using the four ribonucleoside triphosphates as substrates. This chain is DNA-directed RNA polymerase subunit beta', found in Aethionema cordifolium (Lebanon stonecress).